We begin with the raw amino-acid sequence, 240 residues long: Phosducin-like protein 2 (240 aa).

Residues 54–214 form the Phosducin domain; sequence QRDKKIDDMS…MLGQAGAVPT (161 aa). Phosphoserine occurs at positions 63 and 73. The segment at 99–240 is thioredoxin fold; sequence FGSVREISGQ…DLEDKSSDFY (142 aa).

This sequence belongs to the phosducin family.

The protein resides in the cytoplasm. Its function is as follows. Modulates the activation of caspases during apoptosis. This is Phosducin-like protein 2 from Drosophila melanogaster (Fruit fly).